The sequence spans 118 residues: Aspartate 1-decarboxylase (118 aa).

The active-site Schiff-base intermediate with substrate; via pyruvic acid is S25. S25 carries the post-translational modification Pyruvic acid (Ser). Substrate is bound at residue T57. Y58 acts as the Proton donor in catalysis. 73–75 serves as a coordination point for substrate; that stretch reads GAA.

This sequence belongs to the PanD family. Heterooctamer of four alpha and four beta subunits. Pyruvate is required as a cofactor. Post-translationally, is synthesized initially as an inactive proenzyme, which is activated by self-cleavage at a specific serine bond to produce a beta-subunit with a hydroxyl group at its C-terminus and an alpha-subunit with a pyruvoyl group at its N-terminus.

Its subcellular location is the cytoplasm. The catalysed reaction is L-aspartate + H(+) = beta-alanine + CO2. It functions in the pathway cofactor biosynthesis; (R)-pantothenate biosynthesis; beta-alanine from L-aspartate: step 1/1. Catalyzes the pyruvoyl-dependent decarboxylation of aspartate to produce beta-alanine. This chain is Aspartate 1-decarboxylase, found in Leptospira biflexa serovar Patoc (strain Patoc 1 / Ames).